A 504-amino-acid chain; its full sequence is ATP synthase subunit alpha 2 (504 aa).

Residue 169–176 (GDRQTGKT) participates in ATP binding.

It belongs to the ATPase alpha/beta chains family. As to quaternary structure, F-type ATPases have 2 components, CF(1) - the catalytic core - and CF(0) - the membrane proton channel. CF(1) has five subunits: alpha(3), beta(3), gamma(1), delta(1), epsilon(1). CF(0) has three main subunits: a(1), b(2) and c(9-12). The alpha and beta chains form an alternating ring which encloses part of the gamma chain. CF(1) is attached to CF(0) by a central stalk formed by the gamma and epsilon chains, while a peripheral stalk is formed by the delta and b chains.

The protein localises to the cell membrane. It carries out the reaction ATP + H2O + 4 H(+)(in) = ADP + phosphate + 5 H(+)(out). Produces ATP from ADP in the presence of a proton gradient across the membrane. The alpha chain is a regulatory subunit. The chain is ATP synthase subunit alpha 2 from Listeria monocytogenes serovar 1/2a (strain ATCC BAA-679 / EGD-e).